The following is a 73-amino-acid chain: UPF0346 protein lp_1865 (73 aa).

This sequence belongs to the UPF0346 family.

The protein is UPF0346 protein lp_1865 of Lactiplantibacillus plantarum (strain ATCC BAA-793 / NCIMB 8826 / WCFS1) (Lactobacillus plantarum).